The chain runs to 463 residues: Pentatricopeptide repeat-containing protein At2g17670 (463 aa).

Residues 1 to 63 (MGKVPSSFRS…PSLRNPFKSP (63 aa)) form a disordered region. 9 PPR repeats span residues 121–157 (GRST…GLEP), 158–192 (DQVT…HSPP), 193–223 (DTYT…MRDD), 229–263 (DLVS…GFKP), 264–298 (DCFL…GVEP), 299–333 (DQIT…GYEP), 334–368 (DTAT…GCAP), 369–403 (NDCT…GVKL), and 404–438 (ESNG…KSLS).

The protein belongs to the PPR family. P subfamily.

This is Pentatricopeptide repeat-containing protein At2g17670 from Arabidopsis thaliana (Mouse-ear cress).